A 247-amino-acid polypeptide reads, in one-letter code: Ubiquinone biosynthesis O-methyltransferase (247 aa).

S-adenosyl-L-methionine is bound by residues R39, G70, D91, and M134.

This sequence belongs to the methyltransferase superfamily. UbiG/COQ3 family.

The enzyme catalyses a 3-demethylubiquinol + S-adenosyl-L-methionine = a ubiquinol + S-adenosyl-L-homocysteine + H(+). The catalysed reaction is a 3-(all-trans-polyprenyl)benzene-1,2-diol + S-adenosyl-L-methionine = a 2-methoxy-6-(all-trans-polyprenyl)phenol + S-adenosyl-L-homocysteine + H(+). The protein operates within cofactor biosynthesis; ubiquinone biosynthesis. O-methyltransferase that catalyzes the 2 O-methylation steps in the ubiquinone biosynthetic pathway. This is Ubiquinone biosynthesis O-methyltransferase from Cereibacter sphaeroides (strain KD131 / KCTC 12085) (Rhodobacter sphaeroides).